The sequence spans 205 residues: NADH dehydrogenase (205 aa).

FMN is bound by residues 17–21, glutamine 73, 158–159, and arginine 195; these read RRSIR and LG.

Belongs to the nitroreductase family. In terms of assembly, homodimer. It depends on FMN as a cofactor.

The catalysed reaction is a ubiquinone + NADH + 5 H(+)(in) = a ubiquinol + NAD(+) + 4 H(+)(out). Can oxidize either NADH or NADPH with a preference for NADH. Can catalyze electron transfer from NADH to various electron acceptors which include, in addition to molecular oxygen, cytochrome c, 2,6 dichlorphenolindophenol, methylene blue, ferricyanide or P-nitroblue tetrazolium. This Thermus thermophilus (strain ATCC 27634 / DSM 579 / HB8) protein is NADH dehydrogenase (nox).